A 405-amino-acid chain; its full sequence is Putative phosphate permease PYRAB14010 (405 aa).

11 helical membrane-spanning segments follow: residues 3 to 23 (MDPWLLLTLILGLAMAWAIGA), 44 to 64 (AVLIAGILEFTGAYFFGKTVT), 82 to 102 (VLVYGSLAALLGATIWLVIAT), 114 to 134 (IIGGIVGYGVVYAGLEIVNWG), 138 to 158 (SVVLSWILSPIVGAIFAFFIF), 181 to 201 (VWIGLAFVVIGTMFYIKVLHG), 207 to 227 (GVLKLGIPVGLVVFLITSMIL), 264 to 284 (VANAIGPVAAVYTIATMGMAG), 287 to 307 (VPVPRWILALGGLGIAIGVAT), 329 to 349 (FTIDFSAATVVLIASWLGMPI), and 384 to 404 (FVTVPVAGLISAIIFKILWIV).

Belongs to the inorganic phosphate transporter (PiT) (TC 2.A.20) family.

Its subcellular location is the cell membrane. Its function is as follows. Potential transporter for phosphate. This is Putative phosphate permease PYRAB14010 from Pyrococcus abyssi (strain GE5 / Orsay).